Reading from the N-terminus, the 58-residue chain is uncharacterized protein (58 aa).

This is an uncharacterized protein from Bacillus anthracis.